Reading from the N-terminus, the 173-residue chain is Glutamyl-tRNA(Gln) amidotransferase subunit F, mitochondrial (173 aa).

The N-terminal 15 residues, 1–15, are a transit peptide targeting the mitochondrion; it reads MSRFMIRAVFFRRYT.

It belongs to the GatF family. In terms of assembly, subunit of the heterotrimeric GatFAB amidotransferase (AdT) complex, composed of A, B and F subunits.

The protein localises to the mitochondrion inner membrane. It catalyses the reaction L-glutamyl-tRNA(Gln) + L-glutamine + ATP + H2O = L-glutaminyl-tRNA(Gln) + L-glutamate + ADP + phosphate + H(+). Functionally, allows the formation of correctly charged Gln-tRNA(Gln) through the transamidation of misacylated Glu-tRNA(Gln) in the mitochondria. The reaction takes place in the presence of glutamine and ATP through an activated gamma-phospho-Glu-tRNA(Gln). Required for proper protein synthesis within the mitochondrion. The sequence is that of Glutamyl-tRNA(Gln) amidotransferase subunit F, mitochondrial from Candida glabrata (strain ATCC 2001 / BCRC 20586 / JCM 3761 / NBRC 0622 / NRRL Y-65 / CBS 138) (Yeast).